A 530-amino-acid polypeptide reads, in one-letter code: BTB/POZ domain-containing protein 3 (530 aa).

The disordered stretch occupies residues 23 to 48 (KNRSKKGSKKANSSGGGGGGGSVGSG). The segment covering 36–46 (SGGGGGGGSVG) has biased composition (gly residues). Positions 128–198 (ADVHFVVGPP…IYCDEIDLAA (71 aa)) constitute a BTB domain. Residues 243–308 (FEEPDLTQRC…NWAEVECQRQ (66 aa)) enclose the BACK domain.

In terms of tissue distribution, in the somatosensory cortex, specifically expressed in spiny stellate neurons during barrel formation. Also expressed in the olfactory bulb, piriform cortex and hippocampus.

It localises to the cytoplasm. The protein localises to the cytosol. It is found in the nucleus. Functionally, acts as a key regulator of dendritic field orientation during development of sensory cortex. Also directs dendrites toward active axon terminals when ectopically expressed. The chain is BTB/POZ domain-containing protein 3 (Btbd3) from Mus musculus (Mouse).